Consider the following 367-residue polypeptide: Glutamate 5-kinase (367 aa).

K10 serves as a coordination point for ATP. Positions 50, 137, and 149 each coordinate substrate. ATP is bound by residues 169–170 (TD) and 211–217 (TGGMSTK). The region spanning 275–353 (AGEITVDEGA…QQIDAILGYE (79 aa)) is the PUA domain.

This sequence belongs to the glutamate 5-kinase family.

Its subcellular location is the cytoplasm. The enzyme catalyses L-glutamate + ATP = L-glutamyl 5-phosphate + ADP. The protein operates within amino-acid biosynthesis; L-proline biosynthesis; L-glutamate 5-semialdehyde from L-glutamate: step 1/2. Catalyzes the transfer of a phosphate group to glutamate to form L-glutamate 5-phosphate. The polypeptide is Glutamate 5-kinase (Salmonella agona (strain SL483)).